A 74-amino-acid polypeptide reads, in one-letter code: Small ribosomal subunit protein bS18 (74 aa).

It belongs to the bacterial ribosomal protein bS18 family. As to quaternary structure, part of the 30S ribosomal subunit. Forms a tight heterodimer with protein bS6.

Functionally, binds as a heterodimer with protein bS6 to the central domain of the 16S rRNA, where it helps stabilize the platform of the 30S subunit. The polypeptide is Small ribosomal subunit protein bS18 (Alkalilimnicola ehrlichii (strain ATCC BAA-1101 / DSM 17681 / MLHE-1)).